A 301-amino-acid polypeptide reads, in one-letter code: N-acetylmuramic acid 6-phosphate etherase (301 aa).

The 164-residue stretch at Ile57–Lys220 folds into the SIS domain. The Proton donor role is filled by Glu85. Glu116 is an active-site residue.

Belongs to the GCKR-like family. MurNAc-6-P etherase subfamily. In terms of assembly, homodimer.

It catalyses the reaction N-acetyl-D-muramate 6-phosphate + H2O = N-acetyl-D-glucosamine 6-phosphate + (R)-lactate. It functions in the pathway amino-sugar metabolism; 1,6-anhydro-N-acetylmuramate degradation. Its pathway is amino-sugar metabolism; N-acetylmuramate degradation. The protein operates within cell wall biogenesis; peptidoglycan recycling. Specifically catalyzes the cleavage of the D-lactyl ether substituent of MurNAc 6-phosphate, producing GlcNAc 6-phosphate and D-lactate. Together with AnmK, is also required for the utilization of anhydro-N-acetylmuramic acid (anhMurNAc) either imported from the medium or derived from its own cell wall murein, and thus plays a role in cell wall recycling. This chain is N-acetylmuramic acid 6-phosphate etherase, found in Pasteurella multocida (strain Pm70).